A 484-amino-acid chain; its full sequence is MATTTSLLSSCLCALLLAPLFSQGVDAWESRQGASRQCRFDRLQAFEPLRKVRSEAGDTEYFDERNEQFRCAGVFVIRRVIEPQGLVVPRYSNTPALAYIIQGKGYVGLTFPGCPATHQQQFQLFEQRQSDQAHKFRDEHQKIHEFRQGDVVALPASVAHWFYNGGDTPAVVVYVYDIKSFANQLEPRQKEFLLAGNNQRGQQIFEHSIFQHSGQNIFSGFNTEVLSEALGINTEASKRLQSQNDQRGDIIRVKHGLQLLKPTLTQRQEEHRQYQQVQYREGQYNGLDENFCTIKARVNIENPSRADYYNPRAGRITLLNNQKFPILNLIGMGAARVNLYQNALLSPFWNINAHSVVYIIQGSVRVQVANNQGRSVFNGVLHQGQLLIIPQNHAVIKKAEHNGCQYVAIKTISDPTVSWVAGKNSILRALPVDVIANAYRISRDEARRLKNNRADEIGPFTPRFPQKSQRGYQFLTEGLSLIGM.

Positions methionine 1 to alanine 27 are cleaved as a signal peptide. 2 cysteine pairs are disulfide-bonded: cysteine 38–cysteine 71 and cysteine 114–cysteine 292. 2 consecutive Cupin type-1 domains span residues leucine 43 to lysine 238 and valine 298 to arginine 447.

The protein belongs to the 11S seed storage protein (globulins) family. In terms of assembly, hexamer; each subunit is composed of an acidic and a basic chain derived from a single precursor and linked by a disulfide bond.

It is found in the protein storage vacuole. Seed storage protein. The polypeptide is Glutelin type-D 1 (Oryza sativa subsp. japonica (Rice)).